Consider the following 642-residue polypeptide: Threonine--tRNA ligase (642 aa).

Residues 1 to 63 (MSTVTVTLPD…TADVELEIVT (63 aa)) form the TGS domain. Residues 242–533 (DHRKIGQEMD…LTEHYNGKFP (292 aa)) are catalytic. Positions 334, 385, and 510 each coordinate Zn(2+).

The protein belongs to the class-II aminoacyl-tRNA synthetase family. Homodimer. Requires Zn(2+) as cofactor.

The protein localises to the cytoplasm. The catalysed reaction is tRNA(Thr) + L-threonine + ATP = L-threonyl-tRNA(Thr) + AMP + diphosphate + H(+). Catalyzes the attachment of threonine to tRNA(Thr) in a two-step reaction: L-threonine is first activated by ATP to form Thr-AMP and then transferred to the acceptor end of tRNA(Thr). This chain is Threonine--tRNA ligase, found in Haloarcula marismortui (strain ATCC 43049 / DSM 3752 / JCM 8966 / VKM B-1809) (Halobacterium marismortui).